Here is a 168-residue protein sequence, read N- to C-terminus: CDP-archaeol synthase (168 aa).

The next 5 membrane-spanning stretches (helical) occupy residues 7-27 (PLES…PVLL), 55-75 (GLAT…SATC), 80-100 (YAAG…GAFI), 109-129 (GAPA…LALY), and 130-150 (AAGY…VIAL).

Belongs to the CDP-archaeol synthase family. Mg(2+) serves as cofactor.

Its subcellular location is the cell membrane. The enzyme catalyses 2,3-bis-O-(geranylgeranyl)-sn-glycerol 1-phosphate + CTP + H(+) = CDP-2,3-bis-O-(geranylgeranyl)-sn-glycerol + diphosphate. Its pathway is membrane lipid metabolism; glycerophospholipid metabolism. Catalyzes the formation of CDP-2,3-bis-(O-geranylgeranyl)-sn-glycerol (CDP-archaeol) from 2,3-bis-(O-geranylgeranyl)-sn-glycerol 1-phosphate (DGGGP) and CTP. This reaction is the third ether-bond-formation step in the biosynthesis of archaeal membrane lipids. The polypeptide is CDP-archaeol synthase (Hyperthermus butylicus (strain DSM 5456 / JCM 9403 / PLM1-5)).